The sequence spans 1196 residues: Chromosome partition protein Smc (1196 aa).

32-39 (PNGSGKSN) contributes to the ATP binding site. 2 coiled-coil regions span residues 168–288 (LKHR…SVQQ) and 327–497 (DALE…LERK). One can recognise an SMC hinge domain in the interval 510-621 (AGILGPMAKL…VDDLDRALAL (112 aa)). Coiled-coil stretches lie at residues 654–829 (LEVT…RAQQ) and 972–1026 (DRPT…KDLL).

The protein belongs to the SMC family. In terms of assembly, homodimer.

It localises to the cytoplasm. Required for chromosome condensation and partitioning. The chain is Chromosome partition protein Smc from Mycolicibacterium paratuberculosis (strain ATCC BAA-968 / K-10) (Mycobacterium paratuberculosis).